The chain runs to 108 residues: UPF0060 membrane protein YnfA (108 aa).

Over 1–5 the chain is Periplasmic; that stretch reads MLKTT. A helical membrane pass occupies residues 6–26; sequence LLFFVTALCEIIGCFLPWLWL. Residues 27–30 lie on the Cytoplasmic side of the membrane; it reads KRGA. Residues 31–51 form a helical membrane-spanning segment; that stretch reads SVWWLLPAAASLALFVWLLTL. Residues 52–60 are Periplasmic-facing; sequence HPAASGRVY. A helical membrane pass occupies residues 61-81; that stretch reads AAYGGVYVCTALLWLRVVDGV. The Cytoplasmic segment spans residues 82–84; that stretch reads RLT. A helical transmembrane segment spans residues 85–105; sequence VYDWCGALIALCGMLIIVVGW. Over 106-108 the chain is Periplasmic; that stretch reads GRT.

The protein belongs to the UPF0060 family.

It localises to the cell inner membrane. The polypeptide is UPF0060 membrane protein YnfA (Salmonella agona (strain SL483)).